Here is an 801-residue protein sequence, read N- to C-terminus: Cadherin-20 (801 aa).

The N-terminal stretch at 1–34 is a signal peptide; sequence MWTSGRMSNAKNWLGLGMSLYFWGLMDLTTTVLS. The propeptide occupies 35-59; that stretch reads DTPTPQGELEALLSDKPQSHQRTKR. Over 60 to 619 the chain is Extracellular; that stretch reads SWVWNQFFVL…AYMLPVSLSR (560 aa). 5 consecutive Cadherin domains span residues 61–165, 166–274, 275–389, 390–494, and 494–610; these read WVWN…EPKF, LDGP…PPRF, PQKH…PPVF, EPGF…APEF, and FPRF…SPEA. N-linked (GlcNAc...) asparagine glycosylation is present at N261. N420, N461, and N542 each carry an N-linked (GlcNAc...) asparagine glycan. Residues 620-640 traverse the membrane as a helical segment; that stretch reads GALIAILACIFVLLVLVLLIL. Residues 641–801 are Cytoplasmic-facing; sequence SMRRHRKQPY…GASEGPAPLW (161 aa).

In terms of tissue distribution, expressed in placenta, adult brain, and fetal brain.

It is found in the cell membrane. Its function is as follows. Cadherins are calcium-dependent cell adhesion proteins. They preferentially interact with themselves in a homophilic manner in connecting cells; cadherins may thus contribute to the sorting of heterogeneous cell types. The chain is Cadherin-20 (CDH20) from Homo sapiens (Human).